Reading from the N-terminus, the 962-residue chain is Putative primase C962R (962 aa).

The 169-residue stretch at 607 to 775 folds into the SF3 helicase domain; it reads ELDARLWIMF…PDPNNSYEKK (169 aa). 636–643 serves as a coordination point for ATP; sequence GGGCNGKT.

It belongs to the asfivirus helicase C962R family.

The polypeptide is Putative primase C962R (Ornithodoros (relapsing fever ticks)).